A 474-amino-acid polypeptide reads, in one-letter code: 3-isopropylmalate dehydratase large subunit (474 aa).

Residues Cys-353, Cys-414, and Cys-417 each contribute to the [4Fe-4S] cluster site.

Belongs to the aconitase/IPM isomerase family. LeuC type 1 subfamily. Heterodimer of LeuC and LeuD. Requires [4Fe-4S] cluster as cofactor.

The enzyme catalyses (2R,3S)-3-isopropylmalate = (2S)-2-isopropylmalate. The protein operates within amino-acid biosynthesis; L-leucine biosynthesis; L-leucine from 3-methyl-2-oxobutanoate: step 2/4. In terms of biological role, catalyzes the isomerization between 2-isopropylmalate and 3-isopropylmalate, via the formation of 2-isopropylmaleate. In Pseudomonas paraeruginosa (strain DSM 24068 / PA7) (Pseudomonas aeruginosa (strain PA7)), this protein is 3-isopropylmalate dehydratase large subunit.